The following is a 386-amino-acid chain: D(1)-like dopamine receptor (386 aa).

A compositionally biased stretch (polar residues) spans 1–10; that stretch reads MEIFTTTRGT. Residues 1 to 28 are disordered; sequence MEIFTTTRGTSAGPEPAPGGHGGTDSPR. Residues 1 to 35 lie on the Extracellular side of the membrane; that stretch reads MEIFTTTRGTSAGPEPAPGGHGGTDSPRTSDLSLR. Residues 36-56 form a helical membrane-spanning segment; sequence ALTGCVLCILIVSTLLGNALV. Topologically, residues 57 to 72 are cytoplasmic; it reads CAAVIKFRHLRSKVTN. Residues 73–92 form a helical membrane-spanning segment; it reads AFVISLAVSDLFVAVLVMPW. Residues 93–109 are Extracellular-facing; the sequence is RAVSEVAGVWLFGAFCD. Residues cysteine 108 and cysteine 188 are joined by a disulfide bond. A helical membrane pass occupies residues 110–131; sequence TWVAFDIMCSTASILHLCIISM. At 132–150 the chain is on the cytoplasmic side; sequence DRYWAISSPFRYERRMTPR. Residues 151–175 form a helical membrane-spanning segment; the sequence is FGCVMIGVAWTLSVLISFIPVQLNW. At 176–195 the chain is on the extracellular side; that stretch reads HARGRERTDPGDCNASLNRT. Residues asparagine 189 and asparagine 193 are each glycosylated (N-linked (GlcNAc...) asparagine). A helical membrane pass occupies residues 196 to 220; that stretch reads YAISSSLISFYIPVLIMVGTYTRIF. Residues 221–266 lie on the Cytoplasmic side of the membrane; the sequence is RIGRTQIRRISSLERAAPRATRGPALCDEESSLKTSFRRETKVLKT. A helical transmembrane segment spans residues 267–292; the sequence is LSVIMGVFVFCWLPFFVLNCMVPFCR. At 293-305 the chain is on the extracellular side; it reads LEPAAAPCVSDTT. Residues 306–325 traverse the membrane as a helical segment; sequence FSVFVWFGWANSSLNPVIYA. The Cytoplasmic portion of the chain corresponds to 326 to 386; that stretch reads FNADFRKAFS…SRGGPYQFAL (61 aa).

The protein belongs to the G-protein coupled receptor 1 family.

The protein localises to the cell membrane. It is found in the cell projection. Its subcellular location is the cilium membrane. Functionally, this is one of the five types (D1 to D5) of receptors for dopamine. The activity of this receptor is mediated by G proteins which activate adenylyl cyclase. The polypeptide is D(1)-like dopamine receptor (Oreochromis mossambicus (Mozambique tilapia)).